The following is a 341-amino-acid chain: Aromatic amino acid aminotransferase (341 aa).

An N6-(pyridoxal phosphate)lysine modification is found at Lys-213.

Belongs to the class-II pyridoxal-phosphate-dependent aminotransferase family. In terms of assembly, homodimer. Requires pyridoxal 5'-phosphate as cofactor.

The catalysed reaction is an aromatic L-alpha-amino acid + 2-oxoglutarate = an aromatic oxo-acid + L-glutamate. In terms of biological role, aminotransferase that catalyzes the conversion of aromatic amino acids and 2-oxoglutarate into corresponding aromatic oxo acids and L-glutamate. The protein is Aromatic amino acid aminotransferase of Corynebacterium glutamicum (strain R).